The primary structure comprises 461 residues: ATP synthase subunit beta (461 aa).

149 to 156 (GGAGVGKT) lines the ATP pocket.

This sequence belongs to the ATPase alpha/beta chains family. In terms of assembly, F-type ATPases have 2 components, CF(1) - the catalytic core - and CF(0) - the membrane proton channel. CF(1) has five subunits: alpha(3), beta(3), gamma(1), delta(1), epsilon(1). CF(0) has three main subunits: a(1), b(2) and c(9-12). The alpha and beta chains form an alternating ring which encloses part of the gamma chain. CF(1) is attached to CF(0) by a central stalk formed by the gamma and epsilon chains, while a peripheral stalk is formed by the delta and b chains.

It localises to the cell membrane. The enzyme catalyses ATP + H2O + 4 H(+)(in) = ADP + phosphate + 5 H(+)(out). Functionally, produces ATP from ADP in the presence of a proton gradient across the membrane. The catalytic sites are hosted primarily by the beta subunits. In Caldanaerobacter subterraneus subsp. tengcongensis (strain DSM 15242 / JCM 11007 / NBRC 100824 / MB4) (Thermoanaerobacter tengcongensis), this protein is ATP synthase subunit beta.